The sequence spans 191 residues: Cell number regulator 1 (191 aa).

A disordered region spans residues 13–44; the sequence is FSAGAPPTAPPPPAAYHQQQQQHGANMDTSRP. Over residues 27–37 the composition is skewed to low complexity; that stretch reads AYHQQQQQHGA. A helical membrane pass occupies residues 91–113; sequence IASGLVYGLICASTGMGCLYSCL.

Belongs to the cornifelin family. In terms of tissue distribution, expressed in roots, coleoptiles, stalks and silks. Detected in leaves, apical meristems, immature ears and pericarps. Highest expression in coleoptiles and silks.

The protein resides in the membrane. In terms of biological role, acts as a negative regulator of cell number. This Zea mays (Maize) protein is Cell number regulator 1 (CNR1).